Reading from the N-terminus, the 410-residue chain is MDGAHSAGLQLQPLPPTSGATSTSLSSSEGSFSYKENLIGALLAIFGHLVVSIALNLQKYCHIRLAGSKDPRAYFKTKTWWLGLLLLLLGELGVFASYAFAPLSLIVPLSAVSVIASAIIGIIFIKEKWKPKDFVRRYVLSFVGCGLAIVGTYLLVTFAPNSHEKMTGENIARHLVSWPFLLYMLVAIVLFCLLLYFYKERNANSIVVILLLVALLGSMTVVTVKAVSGMLVLSIQGNLQLDYPIFYVMFVCMVATAIYQATFLSEASQIYDSSLIASVGYILSTTAAITAGAIFYLDFLGEEALHICMFALGCLIAFLGVFLITRNRKKAIPFEPYISMDAMPGMQDMHAKGTTVQPDLKASFSYGALESNDSISELYTPATLPVMQEEHSSRSTPGVPYRVLEHTKKE.

The segment at 1–24 (MDGAHSAGLQLQPLPPTSGATSTS) is disordered. A run of 9 helical transmembrane segments spans residues 37–57 (NLIGALLAIFGHLVVSIALNL), 80–100 (WWLGLLLLLLGELGVFASYAF), 105–125 (LIVPLSAVSVIASAIIGIIFI), 139–159 (VLSFVGCGLAIVGTYLLVTFA), 175–195 (LVSWPFLLYMLVAIVLFCLLL), 206–226 (IVVILLLVALLGSMTVVTVKA), 244–264 (PIFYVMFVCMVATAIYQATFL), 275–295 (LIASVGYILSTTAAITAGAIF), and 304–324 (ALHICMFALGCLIAFLGVFLI). Residue Ser376 is modified to Phosphoserine. The segment at 389 to 410 (EEHSSRSTPGVPYRVLEHTKKE) is disordered.

The protein belongs to the NIPA family.

Its subcellular location is the membrane. This chain is NIPA-like protein 3 (Nipal3), found in Mus musculus (Mouse).